The chain runs to 191 residues: dITP/XTP pyrophosphatase (191 aa).

8–13 serves as a coordination point for substrate; that stretch reads SKNQGK. Mg(2+) contacts are provided by glutamate 38 and aspartate 67. Aspartate 67 acts as the Proton acceptor in catalysis. Residues serine 68, 146-149, lysine 169, and 174-175 each bind substrate; these read FGYD and HR.

Belongs to the HAM1 NTPase family. In terms of assembly, homodimer. Mg(2+) serves as cofactor.

The enzyme catalyses XTP + H2O = XMP + diphosphate + H(+). The catalysed reaction is dITP + H2O = dIMP + diphosphate + H(+). It carries out the reaction ITP + H2O = IMP + diphosphate + H(+). Its function is as follows. Pyrophosphatase that catalyzes the hydrolysis of nucleoside triphosphates to their monophosphate derivatives, with a high preference for the non-canonical purine nucleotides XTP (xanthosine triphosphate), dITP (deoxyinosine triphosphate) and ITP. Seems to function as a house-cleaning enzyme that removes non-canonical purine nucleotides from the nucleotide pool, thus preventing their incorporation into DNA/RNA and avoiding chromosomal lesions. The sequence is that of dITP/XTP pyrophosphatase from Prochlorococcus marinus subsp. pastoris (strain CCMP1986 / NIES-2087 / MED4).